We begin with the raw amino-acid sequence, 463 residues long: Retinoic acid receptor RXR-gamma (463 aa).

Positions 1–138 (MYGNYSHFMK…TSPGSLVKHI (138 aa)) are modulating. The disordered stretch occupies residues 17–53 (GSPGHSGSTSMSPSAALSTGKPMDSHPSYTDTPVSAP). Positions 21-33 (HSGSTSMSPSAAL) are enriched in polar residues. 2 consecutive NR C4-type zinc fingers follow at residues 139–159 (CAIC…CEGC) and 175–199 (CRDN…YQKC). The segment at residues 139 to 204 (CAICGDRSSG…RYQKCLVMGM (66 aa)) is a DNA-binding region (nuclear receptor). Residues 205-230 (KREAVQEERQRSRERAESEAECASSG) form a hinge region. Residues 211–222 (EERQRSRERAES) are compositionally biased toward basic and acidic residues. The interval 211–232 (EERQRSRERAESEAECASSGHE) is disordered. An NR LBD domain is found at 231-459 (HEDMPVERIL…TFLMEMLETP (229 aa)).

This sequence belongs to the nuclear hormone receptor family. NR2 subfamily. Homodimer. Heterodimer with a RAR molecule. Binds DNA preferentially as a RAR/RXR heterodimer. Interacts with RARA. Post-translationally, acetylated by EP300.

It localises to the nucleus. Its subcellular location is the cytoplasm. In terms of biological role, receptor for retinoic acid. Retinoic acid receptors bind as heterodimers to their target response elements in response to their ligands, all-trans or 9-cis retinoic acid, and regulate gene expression in various biological processes. The RAR/RXR heterodimers bind to the retinoic acid response elements (RARE) composed of tandem 5'-AGGTCA-3' sites known as DR1-DR5. The high affinity ligand for RXRs is 9-cis retinoic acid. The chain is Retinoic acid receptor RXR-gamma (RXRG) from Sus scrofa (Pig).